The following is a 187-amino-acid chain: Shikimate kinase (187 aa).

18-23 (GCGKST) is an ATP binding site. Position 22 (Ser22) interacts with Mg(2+). 3 residues coordinate substrate: Asp40, Arg64, and Gly86. Arg128 is an ATP binding site. Residue Arg147 coordinates substrate. ATP is bound at residue Arg164.

It belongs to the shikimate kinase family. In terms of assembly, monomer. It depends on Mg(2+) as a cofactor.

It is found in the cytoplasm. The enzyme catalyses shikimate + ATP = 3-phosphoshikimate + ADP + H(+). Its pathway is metabolic intermediate biosynthesis; chorismate biosynthesis; chorismate from D-erythrose 4-phosphate and phosphoenolpyruvate: step 5/7. Catalyzes the specific phosphorylation of the 3-hydroxyl group of shikimic acid using ATP as a cosubstrate. This Rhodopirellula baltica (strain DSM 10527 / NCIMB 13988 / SH1) protein is Shikimate kinase.